Reading from the N-terminus, the 805-residue chain is Putative cation-transporting ATPase MJ1226 (805 aa).

4 consecutive transmembrane segments (helical) span residues Ser53–Ile73, His75–Trp95, Ile226–Leu246, and Phe258–Thr278. Asp311 acts as the 4-aspartylphosphate intermediate in catalysis. The next 6 helical transmembrane spans lie at Tyr615 to Leu637, Pro641 to Tyr663, Ile680 to Tyr700, Glu712 to Ile734, Leu747 to Met769, and Gly773 to Ile790.

It belongs to the cation transport ATPase (P-type) (TC 3.A.3) family. Type IIIA subfamily.

The protein resides in the cell membrane. The enzyme catalyses ATP + H2O = ADP + phosphate + H(+). The polypeptide is Putative cation-transporting ATPase MJ1226 (Methanocaldococcus jannaschii (strain ATCC 43067 / DSM 2661 / JAL-1 / JCM 10045 / NBRC 100440) (Methanococcus jannaschii)).